The sequence spans 726 residues: PWWP domain-containing protein 2 (726 aa).

Positions 1–10 (MSTESERIES) are enriched in basic and acidic residues. The tract at residues 1–26 (MSTESERIESVSEANASSLEVGNDQM) is disordered. The segment covering 12 to 26 (SEANASSLEVGNDQM) has biased composition (polar residues). The region spanning 199–260 (DSDLVWAKVR…ASRIKPFRQH (62 aa)) is the PWWP domain. A disordered region spans residues 392–441 (APKISPAEEQSSLVEVSDPEPTKSKQVYTKRRKTNLQTEQSSLVEVSDPD). The span at 426–435 (NLQTEQSSLV) shows a compositional bias: polar residues. 2 consecutive short sequence motifs (nuclear localization signal) follow at residues 460-467 (KKKEKTLA) and 495-502 (KKRKVVQS). 2 disordered regions span residues 472-545 (EKRV…PQKA) and 568-726 (TRLL…VSAE). Residues 494–512 (EKKRKVVQSKVPKSTKKIK) show a composition bias toward basic residues. The span at 606 to 634 (SPSTTLSSPHAASVTKTTSGKSNSVSLDH) shows a compositional bias: polar residues. The span at 658-688 (LESRDLKDSSKEQVVHEDKKEAANVADEKSI) shows a compositional bias: basic and acidic residues.

It belongs to the PDP family. Interacts with DEK3. Binds to MSI4/FVE and MSI5. Component of the PRC2 (polycomb repressive complex 2) complex which regulates histone methylation on histone H3K27.

The protein localises to the nucleus. Functionally, together with PDP1, PDP3 and PDP6, interacts with MSI4/FVE and MSI5 to suppress FLC, MAF4 and MAF5 expression by regulating the function of the PRC2 complex and modulating H3K27me3 level, thereby promoting flowering. The protein is PWWP domain-containing protein 2 of Arabidopsis thaliana (Mouse-ear cress).